A 575-amino-acid chain; its full sequence is E3 ubiquitin-protein ligase IpaH1.4 (575 aa).

Residues 1 to 270 (MIKSTNIQAI…PDYSGPQIFF (270 aa)) form an interaction with target proteins region. LRR repeat units follow at residues 69 to 90 (LQNQEAELNLSELDLKTLPDLP), 91 to 115 (PQITTLEIRKNLLTHLPDLPPMLKV), 117 to 130 (HAQFNQLESLPALP), 131 to 150 (ETLEELNAGDNKIKELPFLP), 151 to 170 (ENLTHLRVHNNRLHILPLLP), 171 to 195 (PELKLLVVSGNRLDSIPPFPDKLEG), 197 to 209 (ALANNFIEQLPEL), and 210 to 233 (PFSMNRAVLMNNNLTTLPESVLRL). The segment at 271–281 (SMGNSATISAP) is linker. Residues 282 to 575 (EHSLADAVTA…LSENGSNHIA (294 aa)) form an E3 ubiquitin-protein ligase catalytic domain region. Positions 284 to 575 (SLADAVTAWF…LSENGSNHIA (292 aa)) constitute an NEL domain. The active-site Glycyl thioester intermediate is the C368.

The protein belongs to the LRR-containing bacterial E3 ligase family. As to quaternary structure, interacts with human RBCK1/HOIL-1 and RNF31/HOIP components of the LUBAC complex. Post-translationally, ubiquitinated in the presence of host E1 ubiquitin-activating enzyme, E2 ubiquitin-conjugating enzyme and ubiquitin.

Its subcellular location is the secreted. It localises to the host cytoplasm. The catalysed reaction is S-ubiquitinyl-[E2 ubiquitin-conjugating enzyme]-L-cysteine + [acceptor protein]-L-lysine = [E2 ubiquitin-conjugating enzyme]-L-cysteine + N(6)-ubiquitinyl-[acceptor protein]-L-lysine.. It functions in the pathway protein modification; protein ubiquitination. With respect to regulation, exists in an autoinhibited state in the absence of substrate protein, probably due to interactions of the leucine-rich repeat domain with the catalytic domain. Is activated upon binding to a substrate protein. Its function is as follows. E3 ubiquitin-protein ligase effector that inhibits host cell innate immunity during bacterial infection by catalyzing 'Lys-48'-linked polyubiquitination and subsequent degradation of host RNF31/HOIP and RBCK1/HOIL-1. Host RNF31/HOIP is the catalytic component of the LUBAC complex, which conjugates linear ('Met-1'-linked) polyubiquitin chains at the surface of bacteria invading the host cytosol to form the ubiquitin coat surrounding bacteria. The bacterial ubiquitin coat acts as an 'eat-me' signal for xenophagy and promotes NF-kappa-B activation. By promoting degradation of host RNF31/HOIP, IpaH1.4 prevents formation of the bacterial ubiquitin coat and activation of host cell innate immunity. The polypeptide is E3 ubiquitin-protein ligase IpaH1.4 (Shigella flexneri).